The sequence spans 182 residues: UPF0690 protein C1orf52 homolog (182 aa).

Positions 1–61 (MAAEEKDPLS…AEKRLPGPDE (61 aa)) are disordered. Positions 23–32 (SDEEDNSEPE) are enriched in acidic residues. Positions 51–61 (KAEKRLPGPDE) are enriched in basic and acidic residues. The residue at position 67 (T67) is a Phosphothreonine. Y132 is subject to Phosphotyrosine. Positions 132–182 (YEDNGDDAPQNAKKARLLPEGEETVESDDEKDEHTSKKRKIELGEPTKKKK) are disordered. A compositionally biased stretch (acidic residues) spans 151–162 (EGEETVESDDEK). The residue at position 158 (S158) is a Phosphoserine. The segment covering 172–182 (IELGEPTKKKK) has biased composition (basic and acidic residues).

The protein belongs to the UPF0690 family.

The protein is UPF0690 protein C1orf52 homolog of Bos taurus (Bovine).